The following is a 775-amino-acid chain: MEAPYSMTAHYDEFQEVKYVSRCGTGGARGTSLPPGFPRGSGRSASGSRSGLPRWNRREVCLLSGLVFAAGLCAILAAMLALKYLGPGAAGGGGACPEGCPERKAFARAARFLSANLDASIDPCQDFYSFACGGWLRRHAIPDDKLTYGTIAAIGEQNEERLRRLLARPTGGPGGAAQRKVRAFFRSCLDMREIERLGPRPMLEVIEDCGGWDLGGAADRPGAARWDLNRLLYKAQGVYSAAALFSLTVSLDDRNSSRYVIRIDQDGLTLPERTLYLAQDEESEKILAAYRVFMQRLLRLLGADAVEQKAQEILQLEQRLANISVSEYDDLRRDVSSAYNKVTLGQLQKIIPHLQWKWLLDQIFQEDFSEEEEVVLLATDYMQQVSQLIRSTPRRILHNYLVWRVVVVLSEHLSSPFREALHELAKEMEGNDKPQELARVCLGQANRHFGMALGALFVHEHFSAASKAKVQQLVEDIKYILGQRLEELDWMDAQTKAAARAKLQYMMVMVGYPDFLLKPEAVDKEYEFEVHEKTYFKNILNSIRFSIQLSVKKIRQEVDKSSWLLPPQALNAYYLPNKNQMVFPAGILQPTLYDPDFPQSLNYGGIGTIIGHELTHGYDDWGGQYDRSGNLLHWWTETSYSHFLRKAECIVRLYDNFTVYNQRVNGKHTLGENIADMGGLKLAYYAYQKWVREHGPEHPLHRLKYTHNQLFFIAFAQNWCIKRRSQSIYLQVLTDKHAPEHYRVLGSVSQFEEFGRAFHCPKDSPMNPVHKCSVW.

Residues 1 to 61 lie on the Cytoplasmic side of the membrane; sequence MEAPYSMTAH…LPRWNRREVC (61 aa). Residues 30–52 form a disordered region; the sequence is GTSLPPGFPRGSGRSASGSRSGL. The segment covering 32–52 has biased composition (low complexity); the sequence is SLPPGFPRGSGRSASGSRSGL. The chain crosses the membrane as a helical; Signal-anchor for type II membrane protein span at residues 62–82; the sequence is LLSGLVFAAGLCAILAAMLAL. Topologically, residues 83-775 are lumenal; that stretch reads KYLGPGAAGG…MNPVHKCSVW (693 aa). The region spanning 99 to 775 is the Peptidase M13 domain; it reads GCPERKAFAR…MNPVHKCSVW (677 aa). Disulfide bonds link C124/C760, C132/C720, C188/C441, and C649/C772. N255 and N322 each carry an N-linked (GlcNAc...) asparagine glycan. A Zn(2+)-binding site is contributed by H612. E613 is an active-site residue. A Zn(2+)-binding site is contributed by H616. N656 is a glycosylation site (N-linked (GlcNAc...) asparagine). E672 contributes to the Zn(2+) binding site. The Proton donor role is filled by D676.

This sequence belongs to the peptidase M13 family. Requires Zn(2+) as cofactor.

It localises to the membrane. Functionally, may contribute to the degradation of peptide hormones and be involved in the inactivation of neuronal peptides. This Mus musculus (Mouse) protein is Endothelin-converting enzyme-like 1 (Ecel1).